A 403-amino-acid polypeptide reads, in one-letter code: MMTKLDPYFGEYGGMFVPQILMPALKQLEAAFVDAQNDPSFQAEFTDLLKNYAGRPTALTLTRNLSPNPLVKIYLKREDLLHGGAHKTNQVLGQALLAKRMGKKEIIAETGAGQHGVATALACALLGLKCKVYMGAKDVERQSPNVFRMRLMGAEVIPVTSGSATLKDACNEAMRDWSASYDKAHYLLGTAAGPHPFPTIVREFQRMIGEETKAQILEREGRLPDAVIACVGGGSNAIGMFADFIDEPSVKLIGVEPAGLGIDTPKHGAPLKHGKTGIFFGMKAPLMQDKEGQIEESYSISAGLDFPSVGPQHAHLAATGRATYESATDDEALAAFQLLARSEGIIPALESAHALAYAIKLAEAATEETLLVVNLSGRGDKDIFTVADILEKQQANNEESGNE.

Position 87 is an N6-(pyridoxal phosphate)lysine (Lys-87).

It belongs to the TrpB family. In terms of assembly, tetramer of two alpha and two beta chains. Pyridoxal 5'-phosphate serves as cofactor.

It carries out the reaction (1S,2R)-1-C-(indol-3-yl)glycerol 3-phosphate + L-serine = D-glyceraldehyde 3-phosphate + L-tryptophan + H2O. The protein operates within amino-acid biosynthesis; L-tryptophan biosynthesis; L-tryptophan from chorismate: step 5/5. In terms of biological role, the beta subunit is responsible for the synthesis of L-tryptophan from indole and L-serine. This is Tryptophan synthase beta chain from Shewanella loihica (strain ATCC BAA-1088 / PV-4).